The sequence spans 907 residues: MNDCENFSPSPEFKWLCDELLGKIYETSSKKHLIGKPVTVRYLEIITNFIKLWRSTVGNYIYPALRLIVPFRDRRIYNVKENTLIKALCRYLRLPKSSETENRLLRWKQRAARGVKLSDFCVEEIRKRQKDYEGANRITIDELNGYLDEVSQEGNGKRMGYMALTDSRAFNYCLNHMTFMEMKFFFDIILKTRVLSGLENMFLTAWHPDATDYLSVVSDLDVLSQRLYNPNERLRQTDLSITISHAFEPQLAKRTHLSYERVASKLQHDFIIEEKMDGERLQIHYINYGEQIKYLSRRGVDFSYLYGENSSSGPISPSLKLHFNVKDCILDGEMITYDTEKDIVLPFGLVKSSAMNQIQSELAGIAPTESYKPLFVAFDLVYLNGKSLTNLALERRKDYLTKILTPVERSVEIIQYMKAINAEAIKDSLEQAISMGSEGIVLKHLHSKYFVGSRNTDWIKIKPEYLEQFGENMDLLIIGREQGKKDSFFCGLSISDPNEVAEKPRFISFCTIANGLSNEEFKDIERKTWGKWHIFSEDPPSPNLLGFGTKVPYEWIHPEDSVVLEVKARAIDTKESEKRKYRSGCTLHFGYCKQIRYDKDWKTVASFSEFEDMKDARNFYNKRKSHQVTDGKKRASKRAKIGIVNSSEPTALVAPVSNTFSNCRFRVISDYFDSTKRRRISQEDLCSVILEHGGEIVYTSDENNLPQDNLYIIGEKLTRECKILLNAKNLIIRPSWIFSCIEEGYKTPFTESDIFRGELESSMDCSQFYTDFNTASLNHLLETANRGIKNPDSDLLLPEVPLFLFSNLKLAVLNSENVLDTSILEVEFAIKCHGGELVHIENASIIIVFNDFISREDLFSLRQKIASKAVKESTESTPRIPRMVDISWALDSIKDNYIAETEHYQCL.

Positions 273, 275, 280, 333, 378, 438, 443, 460, and 462 each coordinate ATP. Lysine 275 functions as the N6-AMP-lysine intermediate in the catalytic mechanism. Glutamate 333 is a binding site for Mg(2+). Glutamate 438 serves as a coordination point for Mg(2+). 2 BRCT domains span residues 655–754 (PVSN…ESDI) and 800–906 (VPLF…HYQC).

This sequence belongs to the ATP-dependent DNA ligase family. Mg(2+) serves as cofactor.

It localises to the nucleus. It catalyses the reaction ATP + (deoxyribonucleotide)n-3'-hydroxyl + 5'-phospho-(deoxyribonucleotide)m = (deoxyribonucleotide)n+m + AMP + diphosphate.. DNA ligase involved in DNA non-homologous end joining (NHEJ); required for double-strand break (DSB) repair. The protein is DNA ligase 4 (LIG4) of Kluyveromyces lactis (strain ATCC 8585 / CBS 2359 / DSM 70799 / NBRC 1267 / NRRL Y-1140 / WM37) (Yeast).